The following is a 1160-amino-acid chain: Pesticidal crystal protein Cry1Db (1160 aa).

It belongs to the delta endotoxin family.

Its function is as follows. Promotes colloidosmotic lysis by binding to the midgut epithelial cells of insects. The protein is Pesticidal crystal protein Cry1Db (cry1Db) of Bacillus thuringiensis.